The chain runs to 464 residues: Putative dipeptidase CPC735_014430 (464 aa).

Positions 1–34 (MSTMSARDNEKGSARSQPSHAAASEIENVPRPSR) are disordered. A helical transmembrane segment spans residues 40 to 56 (GTMIKVFIICACAGIVS). Zn(2+) contacts are provided by H93, D95, and E206. A disulfide bond links C145 and C235. Position 233 (H233) interacts with substrate. Zn(2+)-binding residues include H277 and H298. Positions 309 and 369 each coordinate substrate. N382 carries an N-linked (GlcNAc...) asparagine glycan.

The protein belongs to the metallo-dependent hydrolases superfamily. Peptidase M19 family. The cofactor is Zn(2+).

Its subcellular location is the membrane. It carries out the reaction an L-aminoacyl-L-amino acid + H2O = 2 an L-alpha-amino acid. Hydrolyzes a wide range of dipeptides. The protein is Putative dipeptidase CPC735_014430 of Coccidioides posadasii (strain C735) (Valley fever fungus).